Consider the following 113-residue polypeptide: U11-theraphotoxin-Hhn1a (113 aa).

The first 21 residues, 1–21, serve as a signal peptide directing secretion; that stretch reads MNTVRVTFLLVFVLAVSLGRA. A propeptide spanning residues 22 to 74 is cleaved from the precursor; the sequence is DKEENRMEMQEKTEQGKSYLDFAENLLLQKLEELEAKLLEEDSEESRNSRQKR. The interval 61-83 is disordered; the sequence is EEDSEESRNSRQKRCIGEGVPCD. 3 disulfides stabilise this stretch: Cys75–Cys90, Cys82–Cys95, and Cys89–Cys110.

The protein belongs to the neurotoxin 14 (magi-1) family. 01 (HNTX-16) subfamily. In terms of tissue distribution, expressed by the venom gland.

The protein localises to the secreted. In terms of biological role, probable ion channel inhibitor. The polypeptide is U11-theraphotoxin-Hhn1a (Cyriopagopus hainanus (Chinese bird spider)).